The following is a 590-amino-acid chain: Aspartate--tRNA(Asp/Asn) ligase (590 aa).

Glutamate 170 is a binding site for L-aspartate. The interval 194-197 (QLFK) is aspartate. Arginine 216 serves as a coordination point for L-aspartate. ATP-binding positions include 216–218 (RDE) and glutamine 225. Residue histidine 448 participates in L-aspartate binding. Residue glutamate 482 participates in ATP binding. Residue arginine 489 participates in L-aspartate binding. Residue 534 to 537 (GWDR) participates in ATP binding. A disordered region spans residues 557 to 590 (SGGGADPLTGAPAPITPQQRRESGIDAKPKKDGE). Residues 575–590 (QRRESGIDAKPKKDGE) are compositionally biased toward basic and acidic residues.

Belongs to the class-II aminoacyl-tRNA synthetase family. Type 1 subfamily. Homodimer.

Its subcellular location is the cytoplasm. It catalyses the reaction tRNA(Asx) + L-aspartate + ATP = L-aspartyl-tRNA(Asx) + AMP + diphosphate. Aspartyl-tRNA synthetase with relaxed tRNA specificity since it is able to aspartylate not only its cognate tRNA(Asp) but also tRNA(Asn). Reaction proceeds in two steps: L-aspartate is first activated by ATP to form Asp-AMP and then transferred to the acceptor end of tRNA(Asp/Asn). The sequence is that of Aspartate--tRNA(Asp/Asn) ligase from Mycobacterium sp. (strain KMS).